A 156-amino-acid chain; its full sequence is Arginine repressor (156 aa).

It belongs to the ArgR family.

The protein localises to the cytoplasm. The protein operates within amino-acid biosynthesis; L-arginine biosynthesis [regulation]. Regulates arginine biosynthesis genes. The polypeptide is Arginine repressor (Enterobacter sp. (strain 638)).